Here is a 339-residue protein sequence, read N- to C-terminus: UDP-glucose 4-epimerase (339 aa).

Residues 12–13, 32–37, 59–60, 81–85, Asn-100, Ser-125, Tyr-150, Lys-154, and Phe-179 contribute to the NAD(+) site; these read FI, DNLCNS, DI, and FAGLK. The substrate site is built by Ser-125 and Tyr-150. Tyr-150 serves as the catalytic Proton acceptor. Substrate is bound by residues Asn-180, 200–201, 217–219, Arg-232, and 293–296; these read NL, AVF, and RAGD.

It belongs to the NAD(P)-dependent epimerase/dehydratase family. In terms of assembly, homodimer. NAD(+) serves as cofactor.

It carries out the reaction UDP-alpha-D-glucose = UDP-alpha-D-galactose. Its pathway is carbohydrate metabolism; galactose metabolism. Involved in the metabolism of galactose. Plays an essential role in the incorporation of galactose into meningococcal lipopolysaccharide surface molecules, which are important for pathogenesis. Catalyzes the conversion of UDP-galactose (UDP-Gal) to UDP-glucose (UDP-Glc) through a mechanism involving the transient reduction of NAD. The polypeptide is UDP-glucose 4-epimerase (galE) (Neisseria meningitidis serogroup C).